Here is a 209-residue protein sequence, read N- to C-terminus: Ribosomal RNA large subunit methyltransferase E (209 aa).

The S-adenosyl-L-methionine site is built by Gly63, Trp65, Asp83, Asp99, and Asp124. The active-site Proton acceptor is Lys164.

It belongs to the class I-like SAM-binding methyltransferase superfamily. RNA methyltransferase RlmE family.

Its subcellular location is the cytoplasm. It carries out the reaction uridine(2552) in 23S rRNA + S-adenosyl-L-methionine = 2'-O-methyluridine(2552) in 23S rRNA + S-adenosyl-L-homocysteine + H(+). Its function is as follows. Specifically methylates the uridine in position 2552 of 23S rRNA at the 2'-O position of the ribose in the fully assembled 50S ribosomal subunit. The protein is Ribosomal RNA large subunit methyltransferase E of Shewanella oneidensis (strain ATCC 700550 / JCM 31522 / CIP 106686 / LMG 19005 / NCIMB 14063 / MR-1).